Here is a 179-residue protein sequence, read N- to C-terminus: Endoribonuclease YbeY (179 aa).

The Zn(2+) site is built by H148, H152, and H158.

It belongs to the endoribonuclease YbeY family. It depends on Zn(2+) as a cofactor.

The protein resides in the cytoplasm. In terms of biological role, single strand-specific metallo-endoribonuclease involved in late-stage 70S ribosome quality control and in maturation of the 3' terminus of the 16S rRNA. This chain is Endoribonuclease YbeY, found in Prochlorococcus marinus (strain MIT 9312).